The chain runs to 340 residues: MTEASLNEAATAAITAFDGADNLEELAALRRDHLGDNAPIPQARRSLGTIPKDQRKDAGRFVNMALGRVEKHFAQVKAQLEEKRNREVLEQERVDVTVPTTRTQVGALHPITILNEQIADIFVGMGWEVAEGPEVEAEYFNFDALNFLPDHPARTLQDTFHIGPEGSRQVLRTHTSPVQIRSMLDREVPIYIACPGRVFRTDELDATHTPVFHQIEGLAVDKGLTMAHLRGTLDHLARELFGPETKTRMRSNYFPFTEPSAEVDVWFPNKKGGAGWIEWGGCGMVNPNVLRAVGIDPEEYSGFAFGMGIERTLQFRNGLSDMRDMVEGDVRFTLPFGIQA.

Glu258 provides a ligand contact to Mg(2+).

Belongs to the class-II aminoacyl-tRNA synthetase family. Phe-tRNA synthetase alpha subunit type 1 subfamily. In terms of assembly, tetramer of two alpha and two beta subunits. Requires Mg(2+) as cofactor.

It localises to the cytoplasm. It carries out the reaction tRNA(Phe) + L-phenylalanine + ATP = L-phenylalanyl-tRNA(Phe) + AMP + diphosphate + H(+). This is Phenylalanine--tRNA ligase alpha subunit from Corynebacterium efficiens (strain DSM 44549 / YS-314 / AJ 12310 / JCM 11189 / NBRC 100395).